A 123-amino-acid chain; its full sequence is PCNA-associated factor (123 aa).

The disordered stretch occupies residues 1-123 (MVRTKADCAG…SEEAADSGDE (123 aa)). The short motif at 26-37 (RKTFGSSSSGSN) is the D-box element. The short motif at 66–77 (QKGIGDFFGSPS) is the PIP-box element. Residues 83–85 (KEN) carry the KEN box motif. Residues 93 to 105 (EAGGSGAGKKPRK) carry the Initiation motif motif. Acidic residues predominate over residues 113 to 123 (PSEEAADSGDE).

As to quaternary structure, interacts with pcna.

The protein resides in the nucleus. The protein localises to the cytoplasm. It is found in the perinuclear region. PCNA-binding protein that acts as a regulator of DNA repair during DNA replication. Following DNA damage, the interaction with pcna is disrupted, facilitating the interaction between monoubiquitinated pcna and the translesion DNA synthesis DNA polymerase eta (polh) at stalled replisomes, facilitating the bypass of replication-fork-blocking lesions. Also acts as a regulator of centrosome number. This chain is PCNA-associated factor, found in Xenopus laevis (African clawed frog).